Consider the following 397-residue polypeptide: MSYARRSCICGLFLLFLALVCEANSGFIGVKDSHFELNGSPFLFNGFNSYWLMHVAADPTERYKVTEVLKDASVAGLSVCRTWAFSDGGDRALQISPGIYDERVFQGLDFVIAEAKKYGIRLILSFVNQWNDFGGKAQYVWWARNAGAQISNDDEFYTHPMLKKYLKNHIEKVVTRLNSITKVAYKDDPTIMAWELMNEPRDQADYSGKTVNGWVQEMASFVKSLDNKHLLEVGMEGFYGDSIPERKSVNPGYQVGTDFISNHLINEIDFATIHAYTDQWVSGQSDDAQLVWMEKWITSHWEDARNILKKPLVLAEFGKSSRGQGSRDIFMSSVYRNVYNLAKEGGTMAGSLVWQLMAHGMENYDDGYCIVLGQTPSTTQIISDQAHVMTALARSLN.

The first 23 residues, 1 to 23 (MSYARRSCICGLFLLFLALVCEA), serve as a signal peptide directing secretion. Positions 83 and 198 each coordinate substrate. Residue glutamate 199 is the Proton donor of the active site. Substrate is bound at residue tyrosine 276. The active-site Nucleophile is the glutamate 316. Tryptophan 354 serves as a coordination point for substrate.

The protein belongs to the glycosyl hydrolase 5 (cellulase A) family.

The protein resides in the secreted. It catalyses the reaction Random hydrolysis of (1-&gt;4)-beta-D-mannosidic linkages in mannans, galactomannans and glucomannans.. This is Mannan endo-1,4-beta-mannosidase 1 (MAN1) from Solanum lycopersicum (Tomato).